A 185-amino-acid chain; its full sequence is Bacteriocin UviA (185 aa).

Functionally, may have a role in bacteriocin secretion or immunity. This chain is Bacteriocin UviA (uviA), found in Clostridium perfringens.